The chain runs to 878 residues: Serine/threonine-protein kinase N3 (878 aa).

REM-1 domains follow at residues glutamate 2–leucine 77, serine 86–proline 165, and proline 169–proline 238. Serine 164 is subject to Phosphoserine. The disordered stretch occupies residues proline 461–aspartate 525. In terms of domain architecture, Protein kinase spans phenylalanine 548–phenylalanine 807. ATP is bound by residues leucine 554–valine 562 and lysine 577. Aspartate 673 acts as the Proton acceptor in catalysis. Phosphothreonine is present on residues threonine 707, threonine 711, and threonine 849. The region spanning arginine 808–serine 878 is the AGC-kinase C-terminal domain.

This sequence belongs to the protein kinase superfamily. AGC Ser/Thr protein kinase family. PKC subfamily. Post-translationally, autophosphorylated.

It localises to the nucleus. Its subcellular location is the cytoplasm. The protein resides in the perinuclear region. The enzyme catalyses L-seryl-[protein] + ATP = O-phospho-L-seryl-[protein] + ADP + H(+). The catalysed reaction is L-threonyl-[protein] + ATP = O-phospho-L-threonyl-[protein] + ADP + H(+). Its activity is regulated as follows. Two specific sites, Thr-707 (activation loop of the kinase domain) and Thr-849 (turn motif), need to be phosphorylated for its full activation. In terms of biological role, contributes to invasiveness in malignant prostate cancer. This chain is Serine/threonine-protein kinase N3 (Pkn3), found in Mus musculus (Mouse).